Reading from the N-terminus, the 596-residue chain is Linalool synthase TPS3, chloroplastic (596 aa).

The N-terminal 39 residues, 1 to 39, are a transit peptide targeting the chloroplast; sequence MISSLNPLFTTHRSGVIAQQFFASSAAASINSVSSLKIA. The (2E)-geranyl diphosphate site is built by Arg308, Asp345, Asp349, Arg486, and Asn489. Mg(2+)-binding residues include Asp345 and Asp349. A DDXXD motif motif is present at residues 345-349; the sequence is DDIYD. Residues Asn489, Thr493, and Ser497 each contribute to the Mg(2+) site.

This sequence belongs to the terpene synthase family. Tpsb subfamily. Monomer. It depends on Mg(2+) as a cofactor. Requires Mn(2+) as cofactor. In terms of tissue distribution, expressed in flowers and fruits.

The protein resides in the plastid. The protein localises to the chloroplast. The enzyme catalyses (2E)-geranyl diphosphate = beta-myrcene + diphosphate. It carries out the reaction (2E)-geranyl diphosphate + H2O = linalool + diphosphate. The catalysed reaction is (2E)-geranyl diphosphate = (Z)-beta-ocimene + diphosphate. It catalyses the reaction (2E)-geranyl diphosphate = (E)-beta-ocimene + diphosphate. It functions in the pathway secondary metabolite biosynthesis; terpenoid biosynthesis. Monoterpene synthase (mono-TPS) involved in the biosynthesis of monoterpenes natural products, constituent of coffee beverage aroma. Catalyzes the conversion of (2E)-geranyl diphosphate (GPP) into linalool and beta-myrcene, and, as minor products, cis-ocimene and trans-ocimene. Not able to use geranylgeranyl pyrophosphate (GGPP) and farnesyl pyrophosphate (FPP) as substrates. This chain is Linalool synthase TPS3, chloroplastic, found in Coffea arabica (Arabian coffee).